Consider the following 837-residue polypeptide: Valine--tRNA ligase (837 aa).

Positions Pro46–His56 match the 'HIGH' region motif. A 'KMSKS' region motif is present at residues Lys514–Ser518. ATP is bound at residue Lys517. Residues Val767–His837 adopt a coiled-coil conformation.

The protein belongs to the class-I aminoacyl-tRNA synthetase family. ValS type 1 subfamily. In terms of assembly, monomer.

Its subcellular location is the cytoplasm. The catalysed reaction is tRNA(Val) + L-valine + ATP = L-valyl-tRNA(Val) + AMP + diphosphate. In terms of biological role, catalyzes the attachment of valine to tRNA(Val). As ValRS can inadvertently accommodate and process structurally similar amino acids such as threonine, to avoid such errors, it has a 'posttransfer' editing activity that hydrolyzes mischarged Thr-tRNA(Val) in a tRNA-dependent manner. The polypeptide is Valine--tRNA ligase (Mycoplasma genitalium (strain ATCC 33530 / DSM 19775 / NCTC 10195 / G37) (Mycoplasmoides genitalium)).